The sequence spans 321 residues: Cytochrome c biogenesis protein CcsA (321 aa).

8 consecutive transmembrane segments (helical) span residues 17–37 (IVSI…IVGL), 44–64 (GMIS…IYSG), 71–91 (LYES…IPYF), 98–118 (LSLV…SGLL), 143–163 (MVLS…LLVI), 225–245 (VISL…VWAN), 258–275 (ETWA…LHTR), and 286–306 (AIVA…VNLL).

This sequence belongs to the CcmF/CycK/Ccl1/NrfE/CcsA family. As to quaternary structure, may interact with Ccs1.

It is found in the plastid. The protein resides in the chloroplast thylakoid membrane. Its function is as follows. Required during biogenesis of c-type cytochromes (cytochrome c6 and cytochrome f) at the step of heme attachment. The chain is Cytochrome c biogenesis protein CcsA from Buxus microphylla (Littleleaf boxwood).